Consider the following 431-residue polypeptide: Divalent metal cation transporter MntH (431 aa).

Transmembrane regions (helical) follow at residues 30-50, 63-83, 106-126, 137-159, 169-189, 209-229, 257-277, 287-307, 309-329, 341-361, 367-387, and 405-425; these read WSWT…IDPG, GYTL…IQTL, PLVW…DLAE, LFGL…ALHL, ILIG…LVLS, YALY…VIYL, VILG…MAAA, VATI…VTAS, VFGL…TLSG, IPLW…IMLG, ALVA…VPLL, and VTGV…YVLF.

It belongs to the NRAMP family.

It localises to the cell inner membrane. In terms of biological role, h(+)-stimulated, divalent metal cation uptake system. The chain is Divalent metal cation transporter MntH from Chromohalobacter salexigens (strain ATCC BAA-138 / DSM 3043 / CIP 106854 / NCIMB 13768 / 1H11).